The sequence spans 315 residues: MPVKIPDNLPAAEILESENIFVMSETRAANQDIRPMRVLILNLMPNKIETETQLLRLLGNTPLQVDVDLLRIHDKESKHTSIDHMNNFYRDFEQVRNKNYDGLIITGAPLGQIEFEDVSYWDHIREIIDWSQQHVTSVLFLCWAAHAALYHLYGLNRSLLTSKRSGVFAHQRTREHFPLLRGFDDEFYAPHSRFAEMDIEQLRSHPELQVLTESDEAGAYMVLSRSNRNLFVMGHPEYQKSTLKDEYERDLSQGLSPEIPQNYFGNDDPTQQPIARWHSHGSLLVSNWLNYYVYQLTPYNLDDMSGRTPWESAVL.

Cys-142 acts as the Acyl-thioester intermediate in catalysis. Substrate contacts are provided by Lys-163 and Ser-192. His-235 functions as the Proton acceptor in the catalytic mechanism. Residue Glu-237 is part of the active site. Arg-249 lines the substrate pocket.

Belongs to the MetA family.

The protein localises to the cytoplasm. The catalysed reaction is L-homoserine + succinyl-CoA = O-succinyl-L-homoserine + CoA. It functions in the pathway amino-acid biosynthesis; L-methionine biosynthesis via de novo pathway; O-succinyl-L-homoserine from L-homoserine: step 1/1. Its function is as follows. Transfers a succinyl group from succinyl-CoA to L-homoserine, forming succinyl-L-homoserine. This chain is Homoserine O-succinyltransferase, found in Shewanella piezotolerans (strain WP3 / JCM 13877).